Consider the following 537-residue polypeptide: Cytochrome P450 monooxygenase alt2 (537 aa).

Residues 4-24 traverse the membrane as a helical segment; that stretch reads HLLILAAVVLLIIHIVNNFLI. Cys-474 contributes to the heme binding site.

The protein belongs to the cytochrome P450 family. Heme serves as cofactor.

The protein resides in the membrane. It participates in secondary metabolite biosynthesis. Its function is as follows. Cytochrome P450 monooxygenase; part of the gene cluster that mediates the biosynthesis of alternapyrone derivatives. Alternapyrone is a decaketide with octa-methylation from methionine on every C2 unit except the third unit. All the domains in the polyketide synthase alt5 are apparently involved in alternapyrone synthesis, that is, the 8 CMeT, 7 KR, 7 DH, and 4 ER reactions in the 9 KS-mediated condensation steps required for alternapyrone synthesis. the alternapyrone produced by alt5 might be intensively modified by cytochrome P450 monooxygenases alt1, alt2 and alt3 and FAD-dependent oxidoreductase alt4 present in the alt gene cluster. The chain is Cytochrome P450 monooxygenase alt2 from Alternaria solani.